Reading from the N-terminus, the 847-residue chain is KN motif and ankyrin repeat domain-containing protein 2 (847 aa).

Positions 1-32 (MAQVLHVPAPFPGTPGQASSAAFPNKEPDPPY) are disordered. Residues 1–72 (MAQVLHVPAP…PVQRRPRLGS (72 aa)) are interaction with AIFM1. A phosphoserine mark is found at S19, S83, S86, S89, and S92. At R105 the chain carries Omega-N-methylarginine. The disordered stretch occupies residues 161–182 (LAGVGLLPPTPRSSGLSTPVAP). Position 170 is a phosphothreonine (T170). 2 coiled-coil regions span residues 187–207 (LAHV…LEEQ) and 284–311 (EAAL…AQTQ). At T331 the chain carries Phosphothreonine. At S358 the chain carries Phosphoserine. Disordered stretches follow at residues 414-473 (GAAR…GGAS) and 502-581 (NGGY…PEEE). Pro residues predominate over residues 420-433 (DPPPSPAEPSPSSP). Composition is skewed to low complexity over residues 434–446 (YPAA…APAA) and 506–516 (ESSSEDSSTAE). Position 536 is a phosphoserine (S536). The stretch at 610–647 (RELKVAYTTVLQEWLRLACRSDAHPELVRRHLVTFRAM) is one ANK 0; degenerate repeat. ANK repeat units lie at residues 662–692 (NGNT…QVDK), 696–729 (AGYS…NVNA), 734–763 (AGQT…DVNM), 767–797 (DGST…DISL), and 801–831 (DGST…KCSF). The interval 665–831 (TALHYSVSHA…YSRMNIKCSF (167 aa)) is interaction with NCOA1.

As to quaternary structure, interacts (non-phosphorylated form) with NCOA1; NCOA2 AND NCOA3. Interacts with AIFM1. Interacts with ARHGDIA; the interaction is direct and may regulate the interaction of ARHGDIA with RHOA, RAC1 and CDC42. Interacts (via ANK repeats 1-5) with KIF21A. Post-translationally, phosphorylated by casein kinase II upon estrogen stimulation. Phosphorylation induces the release by KANK2 of NCOA1 and its translocation to the nucleus where NCOA1 can activate gene transcription. Expressed by podocytes in kidney glomeruli (at protein level).

The protein localises to the cytoplasm. It localises to the mitochondrion. Its function is as follows. Involved in transcription regulation by sequestering in the cytoplasm nuclear receptor coactivators such as NCOA1, NCOA2 and NCOA3. Involved in regulation of caspase-independent apoptosis by sequestering the proapoptotic factor AIFM1 in mitochondria. Pro-apoptotic stimuli can induce its proteasomal degradation allowing the translocation of AIFM1 to the nucleus to induce apoptosis. Involved in the negative control of vitamin D receptor signaling pathway. Involved in actin stress fibers formation through its interaction with ARHGDIA and the regulation of the Rho signaling pathway. May thereby play a role in cell adhesion and migration, regulating for instance podocytes migration during development of the kidney. Through the Rho signaling pathway may also regulate cell proliferation. This is KN motif and ankyrin repeat domain-containing protein 2 from Rattus norvegicus (Rat).